The primary structure comprises 325 residues: Solute-binding protein RD1_1052 (325 aa).

An N-terminal signal peptide occupies residues 1–26 (MRLFTKIKGLAAVTCVAALASSAAFA). D-mannonate-binding positions include E75, 93-95 (GES), 148-151 (RGPR), R171, and N211. L-galactonate contacts are provided by residues E75, 93-95 (GES), 148-151 (RGPR), R171, and N211.

Belongs to the bacterial solute-binding protein 7 family. In terms of assembly, the complex is comprised of an extracytoplasmic solute-binding protein and a heteromeric permease formed by two transmembrane proteins.

The protein localises to the periplasm. In terms of biological role, solute-binding protein that binds L-galactonate and D-mannonate (in vitro). Probably part of a tripartite ATP-independent periplasmic (TRAP) transport system that mediates solute transport into the cytoplasm. The polypeptide is Solute-binding protein RD1_1052 (Roseobacter denitrificans (strain ATCC 33942 / OCh 114) (Erythrobacter sp. (strain OCh 114))).